Reading from the N-terminus, the 282-residue chain is Aldo-keto reductase MT3049 (282 aa).

Tyr57 functions as the Proton donor in the catalytic mechanism. Residues Leu197, Val235, Arg237, Ser238, Ala239, Arg243, Ser246, Asn247, and Arg273 each coordinate NADPH.

Belongs to the aldo/keto reductase family.

The polypeptide is Aldo-keto reductase MT3049 (Mycobacterium tuberculosis (strain CDC 1551 / Oshkosh)).